A 138-amino-acid chain; its full sequence is Large ribosomal subunit protein uL16 (138 aa).

The segment covering 1–13 (MLQPKRRKYRKEQ) has biased composition (basic residues). The segment at 1-20 (MLQPKRRKYRKEQKGRNTGI) is disordered.

The protein belongs to the universal ribosomal protein uL16 family. Part of the 50S ribosomal subunit.

Functionally, binds 23S rRNA and is also seen to make contacts with the A and possibly P site tRNAs. This chain is Large ribosomal subunit protein uL16, found in Ralstonia nicotianae (strain ATCC BAA-1114 / GMI1000) (Ralstonia solanacearum).